Here is a 566-residue protein sequence, read N- to C-terminus: DASGATLAKRQQVVNHLLEHIYDHTHFTDLKNIAGTFSPEAATSIYTDDMEELRDGRLLEQHHWFSLFNTRQRMLFEVLIHCKSWECFLDNAAYFRERMNEGEFVYAIYVAVIHSGIGHGIVIPPIYEVTPHIFTNSEVINKAYSAKMTQTPGRFNMDFTGTKKNKEQRVAYFGEDIGMNIHHVTWHMDFPFWWKDSYGYHLDRKGELFFWVHHQLTARFDSERISNWIDVVDEIHWSCIEGFAPHTSYKYGGEFPARPDNVHFEDVDGVARVRDSRIRDALAHGYLLDNSGNKSSVYSPNVQYYGAIHNTAHIMIGRQGDHKFDMPPGVMEHFETATRDPSFFRLHKYMDNIFKEHKDSLPPYTKNDIAVPGVVIDSVAQLKTFFDTFEVNLGNAKVADVAISADVHRINHEEFSYNIDISNTDKIFICPVKDDNGIMDKFYKSIDPGTNHIVRKSVDSSVTVPDRQYALDLHMFERSCGIPNRDMIIIESRPDGMDFALFVTVDDPEEIGATHSQHGIKKYPDKKPMGYPVDRSIPDNRVFLESPNIKRTYVKVFHDEHGGEQH.

Cys82 and Cys87 are oxidised to a cystine. 6 residues coordinate Cu cation: His183, His187, His213, His309, His313, and His347.

It belongs to the tyrosinase family. Hemocyanin subfamily. As to expression, hemolymph.

The protein localises to the secreted. It localises to the extracellular space. In terms of biological role, hemocyanins are copper-containing oxygen carriers occurring freely dissolved in the hemolymph of many mollusks and arthropods. The polypeptide is Hemocyanin B chain (Astacus leptodactylus (Turkish narrow-clawed crayfish)).